The primary structure comprises 312 residues: Pyridoxal kinase (312 aa).

Methionine 1 carries the N-acetylmethionine modification. Positions 12 and 47 each coordinate pyridoxal. Position 47 (threonine 47) interacts with pyridoxal 5'-phosphate. Serine 59 carries the phosphoserine modification. Residue aspartate 113 participates in ATP binding. Aspartate 113 is a binding site for Na(+). Aspartate 118 lines the Mg(2+) pocket. Threonine 148 serves as a coordination point for Na(+). An ATP-binding site is contributed by 150–153; sequence NQFE. A Phosphoserine modification is found at serine 164. Residue threonine 186 participates in Na(+) binding. Position 186 to 187 (186 to 187) interacts with ATP; that stretch reads TS. Serine 213 carries the post-translational modification Phosphoserine. ATP contacts are provided by residues 226-228 and threonine 233; that span reads VEA. 234-235 serves as a coordination point for pyridoxal 5'-phosphate; sequence GD. Aspartate 235 (proton acceptor) is an active-site residue. A Phosphoserine modification is found at serine 285.

This sequence belongs to the pyridoxine kinase family. Homodimer. The cofactor is Zn(2+). Mg(2+) serves as cofactor.

The protein localises to the cytoplasm. The protein resides in the cytosol. The catalysed reaction is pyridoxal + ATP = pyridoxal 5'-phosphate + ADP + H(+). The enzyme catalyses pyridoxamine + ATP = pyridoxamine 5'-phosphate + ADP + H(+). It carries out the reaction pyridoxine + ATP = pyridoxine 5'-phosphate + ADP + H(+). The protein operates within cofactor metabolism; pyridoxal 5'-phosphate salvage; pyridoxal 5'-phosphate from pyridoxal: step 1/1. It participates in cofactor metabolism; pyridoxal 5'-phosphate salvage; pyridoxine 5'-phosphate from pyridoxine: step 1/1. It functions in the pathway cofactor metabolism; pyridoxal 5'-phosphate salvage; pyridoxamine 5'-phosphate from pyridoxamine: step 1/1. Its activity is regulated as follows. Activity is increased in the presence of K(+)or Na(+). Functionally, catalyzes the phosphorylation of the dietary vitamin B6 vitamers pyridoxal (PL), pyridoxine (PN) and pyridoxamine (PM) to form pyridoxal 5'-phosphate (PLP), pyridoxine 5'-phosphate (PNP) and pyridoxamine 5'-phosphate (PMP), respectively. PLP is the active form of vitamin B6, and acts as a cofactor for over 140 different enzymatic reactions. This is Pyridoxal kinase from Mus musculus (Mouse).